We begin with the raw amino-acid sequence, 613 residues long: Myrcene synthase, chloroplastic (613 aa).

The transit peptide at Met-1 to Gln-46 directs the protein to the chloroplast. Residues Arg-324, Asp-361, and Asp-365 each coordinate (2E)-geranyl diphosphate. Mg(2+)-binding residues include Asp-361 and Asp-365. The DDXXD motif motif lies at Asp-361–Asp-365. Residues Ile-455–Phe-475 form a helical membrane-spanning segment. 2 residues coordinate (2E)-geranyl diphosphate: Arg-503 and Asp-506. Positions 506, 510, and 514 each coordinate Mg(2+).

Belongs to the terpene synthase family. Tpsb subfamily. Mg(2+) is required as a cofactor. Mn(2+) serves as cofactor. In terms of tissue distribution, expressed in trichomes.

It is found in the plastid. It localises to the chloroplast membrane. It carries out the reaction (2E)-geranyl diphosphate = beta-myrcene + diphosphate. The protein operates within secondary metabolite biosynthesis; terpenoid biosynthesis. Monoterpene synthase that catalyzes the formation of myrcene. Can use geranyl diphosphate as substrate, but not farnesyl diphosphate or geranylgeranyl diphosphate. This Humulus lupulus (European hop) protein is Myrcene synthase, chloroplastic.